We begin with the raw amino-acid sequence, 245 residues long: Probable phosphatase KPN78578_10290 (245 aa).

H7, H9, H15, H40, E73, H101, H131, D192, and H194 together coordinate Zn(2+).

It belongs to the PHP family. Homotrimer. Requires Zn(2+) as cofactor.

The polypeptide is Probable phosphatase KPN78578_10290 (Klebsiella pneumoniae subsp. pneumoniae (strain ATCC 700721 / MGH 78578)).